The chain runs to 870 residues: Increased rDNA silencing protein 4 (870 aa).

The segment covering 1 to 11 (MHMRLNKRRRN) has biased composition (basic residues). Disordered stretches follow at residues 1 to 25 (MHMR…QDAK), 38 to 57 (RHAD…DSAG), 62 to 92 (QADT…MHKV), 147 to 260 (IRTT…PSNM), 275 to 315 (GRKN…PSPI), 516 to 579 (YLGN…SSSY), and 717 to 738 (DDSA…LSDG). Positions 75-86 (PSGTSSSHNSGN) are enriched in polar residues. Positions 155 to 166 (QDKKRRDIENAH) are enriched in basic and acidic residues. The segment covering 167-181 (HAASAAAVTSSNLAV) has biased composition (low complexity). Polar residues predominate over residues 184-208 (PPSQYIPSVPTLNVTSPQMRNSSQN). Positions 209–227 (IDRRSKSNEEAHNGHEKMM) are enriched in basic and acidic residues. The segment covering 228-237 (NSRSNSINSS) has biased composition (low complexity). Polar residues predominate over residues 238–259 (TIKGSVSEPNTVTPLRQNSPSN). A compositionally biased stretch (basic residues) spans 299-310 (RPMRTPSGRRVR). A compositionally biased stretch (acidic residues) spans 532-548 (IDDDDDDDDYDSAYEDL). A compositionally biased stretch (basic and acidic residues) spans 549 to 566 (DYSRDDSEAMYKGDRESS). 2 stretches are compositionally biased toward low complexity: residues 567–579 (NPRS…SSSY) and 720–730 (ASNLNSNASTN). Residues 739–828 (DNEEDDVTRF…PKIWDSVDRW (90 aa)) enclose the EH domain.

The protein belongs to the IRS4 family.

Its function is as follows. Positive regulator of phosphatidylinositol 4,5-bisphosphate turnover and negatively regulates signaling through the cell integrity pathway. Involved in rDNA silencing. The sequence is that of Increased rDNA silencing protein 4 (IRS4) from Candida glabrata (strain ATCC 2001 / BCRC 20586 / JCM 3761 / NBRC 0622 / NRRL Y-65 / CBS 138) (Yeast).